The following is a 435-amino-acid chain: ATP-dependent protease ATPase subunit HslU (435 aa).

ATP is bound by residues isoleucine 18, glycine 60–glutamate 65, aspartate 248, glutamate 313, and arginine 385.

The protein belongs to the ClpX chaperone family. HslU subfamily. As to quaternary structure, a double ring-shaped homohexamer of HslV is capped on each side by a ring-shaped HslU homohexamer. The assembly of the HslU/HslV complex is dependent on binding of ATP.

The protein localises to the cytoplasm. Functionally, ATPase subunit of a proteasome-like degradation complex; this subunit has chaperone activity. The binding of ATP and its subsequent hydrolysis by HslU are essential for unfolding of protein substrates subsequently hydrolyzed by HslV. HslU recognizes the N-terminal part of its protein substrates and unfolds these before they are guided to HslV for hydrolysis. The sequence is that of ATP-dependent protease ATPase subunit HslU from Roseobacter denitrificans (strain ATCC 33942 / OCh 114) (Erythrobacter sp. (strain OCh 114)).